Consider the following 119-residue polypeptide: Large ribosomal subunit protein bL20 (119 aa).

Belongs to the bacterial ribosomal protein bL20 family.

Binds directly to 23S ribosomal RNA and is necessary for the in vitro assembly process of the 50S ribosomal subunit. It is not involved in the protein synthesizing functions of that subunit. The chain is Large ribosomal subunit protein bL20 from Xanthomonas campestris pv. campestris (strain 8004).